A 178-amino-acid chain; its full sequence is ATP synthase subunit delta (178 aa).

The protein belongs to the ATPase delta chain family. In terms of assembly, F-type ATPases have 2 components, F(1) - the catalytic core - and F(0) - the membrane proton channel. F(1) has five subunits: alpha(3), beta(3), gamma(1), delta(1), epsilon(1). F(0) has three main subunits: a(1), b(2) and c(10-14). The alpha and beta chains form an alternating ring which encloses part of the gamma chain. F(1) is attached to F(0) by a central stalk formed by the gamma and epsilon chains, while a peripheral stalk is formed by the delta and b chains.

The protein resides in the cell membrane. Functionally, f(1)F(0) ATP synthase produces ATP from ADP in the presence of a proton or sodium gradient. F-type ATPases consist of two structural domains, F(1) containing the extramembraneous catalytic core and F(0) containing the membrane proton channel, linked together by a central stalk and a peripheral stalk. During catalysis, ATP synthesis in the catalytic domain of F(1) is coupled via a rotary mechanism of the central stalk subunits to proton translocation. In terms of biological role, this protein is part of the stalk that links CF(0) to CF(1). It either transmits conformational changes from CF(0) to CF(1) or is implicated in proton conduction. The protein is ATP synthase subunit delta of Mycoplasma pneumoniae (strain ATCC 29342 / M129 / Subtype 1) (Mycoplasmoides pneumoniae).